We begin with the raw amino-acid sequence, 382 residues long: Opsin Rh3 (382 aa).

At 1-56 (MEYHNVSSVLGNVSSVLRPDARLSAESRLLGWNVPPDELRHIPEHWLIYPEPPESM) the chain is on the extracellular side. The N-linked (GlcNAc...) asparagine glycan is linked to Asn12. Residues 57–81 (NYLLGTLYIFFTVISMIGNGLVMWV) traverse the membrane as a helical segment. The Cytoplasmic portion of the chain corresponds to 82–93 (FSAAKSLRTPSN). The helical transmembrane segment at 94–118 (ILVINLAFCDFMMMIKTPIFIYNSF) threads the bilayer. The Extracellular portion of the chain corresponds to 119–132 (HQGYALGHLGCQIF). An intrachain disulfide couples Cys129 to Cys206. Residues 133–152 (GVIGSYTGIAAGATNAFIAY) form a helical membrane-spanning segment. At 153-170 (DRYNVITRPMEGKMTHGK) the chain is on the cytoplasmic side. A helical membrane pass occupies residues 171-195 (AIAMIIFIYLYATPWVVACYTESWG). Topologically, residues 196–219 (RFVPEGYLTSCTFDYLTDNFDTRL) are extracellular. Residues 220-247 (FVACIFFFSFVCPTTMITYYYSQIVGHV) traverse the membrane as a helical segment. Residues 248–283 (FSHEKALRDQAKKMNVDSLRSNVDKSKEAAEIRIAK) are Cytoplasmic-facing. A helical transmembrane segment spans residues 284 to 307 (AAITICFLFFASWTPYGVMSLIGA). Over 308–315 (FGDKTLLT) the chain is Extracellular. Residues 316–340 (PGATMIPACTCKMVACIDPFVYAIS) form a helical membrane-spanning segment. At Lys327 the chain carries N6-(retinylidene)lysine. At 341-382 (HPRYRMELQKRCPWLAISEKAPESAAAISTSTTQEQQQTTAA) the chain is on the cytoplasmic side.

The protein belongs to the G-protein coupled receptor 1 family. Opsin subfamily. Phosphorylated on some or all of the serine and threonine residues present in the C-terminal region.

The protein resides in the membrane. In terms of biological role, visual pigments are the light-absorbing molecules that mediate vision. They consist of an apoprotein, opsin, covalently linked to cis-retinal. This chain is Opsin Rh3 (Rh3), found in Drosophila pseudoobscura pseudoobscura (Fruit fly).